The primary structure comprises 344 residues: Uroporphyrinogen decarboxylase (344 aa).

Substrate is bound by residues 25 to 29 (RQAGR), D75, Y152, S207, and H323.

Belongs to the uroporphyrinogen decarboxylase family. In terms of assembly, homodimer.

Its subcellular location is the cytoplasm. The catalysed reaction is uroporphyrinogen III + 4 H(+) = coproporphyrinogen III + 4 CO2. The protein operates within porphyrin-containing compound metabolism; protoporphyrin-IX biosynthesis; coproporphyrinogen-III from 5-aminolevulinate: step 4/4. Catalyzes the decarboxylation of four acetate groups of uroporphyrinogen-III to yield coproporphyrinogen-III. This Roseobacter denitrificans (strain ATCC 33942 / OCh 114) (Erythrobacter sp. (strain OCh 114)) protein is Uroporphyrinogen decarboxylase.